Reading from the N-terminus, the 358-residue chain is Aromatic amino acid aminotransferase (358 aa).

An N6-(pyridoxal phosphate)lysine modification is found at K222.

Belongs to the class-II pyridoxal-phosphate-dependent aminotransferase family. As to quaternary structure, homodimer. The cofactor is pyridoxal 5'-phosphate.

The enzyme catalyses an aromatic L-alpha-amino acid + 2-oxoglutarate = an aromatic oxo-acid + L-glutamate. Functionally, aminotransferase that catalyzes the conversion of aromatic amino acids and 2-oxoglutarate into corresponding aromatic oxo acids and L-glutamate. The polypeptide is Aromatic amino acid aminotransferase (Mycobacterium sp. (strain KMS)).